The sequence spans 682 residues: Homeobox-leucine zipper protein HDG7 (682 aa).

The interval 33-65 is disordered; it reads LSDDSFDAMSGDEDKQEQRPKKKKRKTKYHRHT. The span at 52-65 shows a compositional bias: basic residues; it reads PKKKKRKTKYHRHT. The homeobox DNA-binding region spans 57-116; the sequence is RKTKYHRHTSYQIQELESFFKECPHPNEKQRLELGKKLTLESKQIKFWFQNRRTQMKTQL. The stretch at 105 to 186 forms a coiled coil; sequence FQNRRTQMKT…LDRICALANR (82 aa). The region spanning 214–429 is the START domain; sequence SGGTSLMFMD…LQRQCESFTM (216 aa).

It belongs to the HD-ZIP homeobox family. Class IV subfamily. Interacts with AIL7/PLT7. As to expression, expressed in cells around the base of leaf primordia, in the outermost 2 to 3 cell layers along the boundary between two leaf primordia. Expressed in lateral root primordia and tips, and in the epidermal boundaries of two cotyledons at heart-stage embryo.

Its subcellular location is the nucleus. In terms of biological role, probable transcription factor that binds to the DNA sequence 5'-GCATTAAATGC-3'. Seems to promote cell differentiation. The sequence is that of Homeobox-leucine zipper protein HDG7 from Arabidopsis thaliana (Mouse-ear cress).